Consider the following 130-residue polypeptide: Small ribosomal subunit protein uS9 (130 aa).

The interval 101–130 is disordered; it reads AGLLTRDARMKERKKPGLKKARKASQFSKR. Residues 111-130 are compositionally biased toward basic residues; the sequence is KERKKPGLKKARKASQFSKR.

The protein belongs to the universal ribosomal protein uS9 family.

This chain is Small ribosomal subunit protein uS9, found in Levilactobacillus brevis (strain ATCC 367 / BCRC 12310 / CIP 105137 / JCM 1170 / LMG 11437 / NCIMB 947 / NCTC 947) (Lactobacillus brevis).